Here is a 78-residue protein sequence, read N- to C-terminus: DNA gyrase inhibitor YacG (78 aa).

Positions 7, 10, 26, and 30 each coordinate Zn(2+).

This sequence belongs to the DNA gyrase inhibitor YacG family. As to quaternary structure, interacts with GyrB. The cofactor is Zn(2+).

Functionally, inhibits all the catalytic activities of DNA gyrase by preventing its interaction with DNA. Acts by binding directly to the C-terminal domain of GyrB, which probably disrupts DNA binding by the gyrase. The sequence is that of DNA gyrase inhibitor YacG from Shewanella piezotolerans (strain WP3 / JCM 13877).